Here is a 61-residue protein sequence, read N- to C-terminus: Sec-independent protein translocase protein TatA (61 aa).

Residues 1-21 form a helical membrane-spanning segment; the sequence is MFGIGMPELIVILVIVLVVFG.

Belongs to the TatA/E family. In terms of assembly, the Tat system comprises two distinct complexes: a TatABC complex, containing multiple copies of TatA, TatB and TatC subunits, and a separate TatA complex, containing only TatA subunits. Substrates initially bind to the TatABC complex, which probably triggers association of the separate TatA complex to form the active translocon.

It localises to the cell inner membrane. In terms of biological role, part of the twin-arginine translocation (Tat) system that transports large folded proteins containing a characteristic twin-arginine motif in their signal peptide across membranes. TatA could form the protein-conducting channel of the Tat system. This Geobacter metallireducens (strain ATCC 53774 / DSM 7210 / GS-15) protein is Sec-independent protein translocase protein TatA.